Here is a 74-residue protein sequence, read N- to C-terminus: Invertase 3 (74 aa).

An N-terminal signal peptide occupies residues 1 to 19 (MLLQAFIFLLAGFAAKISA). An N-linked (GlcNAc...) asparagine glycan is attached at N23. Residues 39–42 (WMND) and Q60 each bind substrate. The active site involves D42. N64 carries an N-linked (GlcNAc...) asparagine glycan.

It belongs to the glycosyl hydrolase 32 family.

The catalysed reaction is Hydrolysis of terminal non-reducing beta-D-fructofuranoside residues in beta-D-fructofuranosides.. The chain is Invertase 3 (SUC3) from Saccharomyces cerevisiae (Baker's yeast).